We begin with the raw amino-acid sequence, 504 residues long: Pup--protein ligase (504 aa).

Glu30 is a Mg(2+) binding site. Arg74 lines the ATP pocket. Tyr76 serves as a coordination point for Mg(2+). Catalysis depends on Asp78, which acts as the Proton acceptor. Position 84 (Glu84) interacts with Mg(2+). 2 residues coordinate ATP: Thr87 and Trp459.

Belongs to the Pup ligase/Pup deamidase family. Pup-conjugating enzyme subfamily.

The enzyme catalyses ATP + [prokaryotic ubiquitin-like protein]-L-glutamate + [protein]-L-lysine = ADP + phosphate + N(6)-([prokaryotic ubiquitin-like protein]-gamma-L-glutamyl)-[protein]-L-lysine.. The protein operates within protein degradation; proteasomal Pup-dependent pathway. It functions in the pathway protein modification; protein pupylation. Catalyzes the covalent attachment of the prokaryotic ubiquitin-like protein modifier Pup to the proteasomal substrate proteins, thereby targeting them for proteasomal degradation. This tagging system is termed pupylation. The ligation reaction involves the side-chain carboxylate of the C-terminal glutamate of Pup and the side-chain amino group of a substrate lysine. In Corynebacterium urealyticum (strain ATCC 43042 / DSM 7109), this protein is Pup--protein ligase.